A 554-amino-acid chain; its full sequence is Glypican-1 (554 aa).

An N-terminal signal peptide occupies residues 1-21; it reads MERLCWGWWWHLGILCLMHWA. 7 disulfide bridges follow: C32-C68, C62-C256, C69-C259, C191-C343, C246-C279, C268-C415, and C272-C401. Residues N79 and N116 are each glycosylated (N-linked (GlcNAc...) asparagine). The disordered stretch occupies residues 346 to 369; that stretch reads PKKTNKGSKSEERRRKGKATQEDK. Residues 353–369 show a composition bias toward basic and acidic residues; sequence SKSEERRRKGKATQEDK. 3 O-linked (Xyl...) (heparan sulfate) serine glycosylation sites follow: S486, S488, and S490.

This sequence belongs to the glypican family. Post-translationally, O-glycosylated with heparan sulfate side chains.

It is found in the cell membrane. It localises to the secreted. The protein resides in the extracellular space. Functionally, cell surface proteoglycan that bears heparan sulfate. The protein is Glypican-1 (gpc1) of Xenopus tropicalis (Western clawed frog).